Reading from the N-terminus, the 263-residue chain is Acetylglutamate kinase (263 aa).

Substrate contacts are provided by residues 49–50 (GG), Arg-71, and Asn-163.

The protein belongs to the acetylglutamate kinase family. ArgB subfamily.

It is found in the cytoplasm. It catalyses the reaction N-acetyl-L-glutamate + ATP = N-acetyl-L-glutamyl 5-phosphate + ADP. It functions in the pathway amino-acid biosynthesis; L-arginine biosynthesis; N(2)-acetyl-L-ornithine from L-glutamate: step 2/4. In terms of biological role, catalyzes the ATP-dependent phosphorylation of N-acetyl-L-glutamate. The protein is Acetylglutamate kinase of Moritella abyssi.